A 526-amino-acid chain; its full sequence is MEELQGYLEKDRSRQQPFLYPLLFQEYIYALAHNHNRGLKGSLFYEPTEVFGYDSKSSLALAKRLIIRIYQQNDFLSVVNDSNKNRFVSHHRYNFCYSHFYSQMISEGFAILVEIPFSLRLVSYFEKKEIPKSHNLRSIHSIFPFLEDKLLHLNYVSDIRIPHPIHMEILVQILQCWIQDVPLLHFLRFFLHKYHNWNWNSFLITPKKSIYVFSKENKRLFRFLYNSYVSECEFLLVFLRKQSSYLRLTSFGLFLERRHFYVKIKRLQMQHLILIVVCRDYFQKALXXXXXXXXXXXRCQGKVVLAPKGTHLLMKKCKYNFVTLWQYYFHFWYQSYRIHINQLSNYSFYFLGYLSSLLKNSSTVRNQMLENSFLVDTVTNKLETLVPVIFLIGSLSKAQFCTVSGHPISKPIWADLPDSEIIERFGRMCRNLSHYHSGSSKKQGLYRIKYILRLSCARTLARKHKSTVRAFLRRLGSGLLEEFFTEEEQVLSLILPKTIPFTFYGSHKERIWYLDIIRINDLVNHS.

It belongs to the intron maturase 2 family. MatK subfamily.

The protein resides in the plastid. Its subcellular location is the chloroplast. Its function is as follows. Usually encoded in the trnK tRNA gene intron. Probably assists in splicing its own and other chloroplast group II introns. The protein is Maturase K of Iris setosa (Hiougi-ayame).